Reading from the N-terminus, the 112-residue chain is MLELVKVLGLFAITALAEIIGCYLPWLVLTQQRPVWLLIPAAVSLGLFAWLLTLHPGAAGRIYAAYGGVYVAIALIWLWRIDGVVPTRWDLVGSAVSLAGMAIIMLQPARSV.

Transmembrane regions (helical) follow at residues 7–27 (VLGL…LPWL), 34–54 (PVWL…LLTL), 59–79 (AGRI…IWLW), and 89–109 (WDLV…LQPA).

This sequence belongs to the UPF0060 family.

The protein resides in the cell inner membrane. The chain is UPF0060 membrane protein Daro_2632 from Dechloromonas aromatica (strain RCB).